The chain runs to 426 residues: Serine/threonine-protein kinase ssn3 (426 aa).

The Protein kinase domain maps to 41 to 368 (YHIVGFISSG…AREALEHPYF (328 aa)). Residues 47-55 (ISSGTYGRV) and lysine 71 each bind ATP. The Proton acceptor role is filled by aspartate 173. Positions 390 to 426 (RVTQDDNDIRSGSLPGTKRSGLPDDSLMGRAAKRLKE) are disordered.

It belongs to the protein kinase superfamily. CMGC Ser/Thr protein kinase family. CDC2/CDKX subfamily. As to quaternary structure, component of the srb8-11 complex, a regulatory module of the Mediator complex. Requires Mg(2+) as cofactor.

The protein resides in the nucleus. The catalysed reaction is L-seryl-[protein] + ATP = O-phospho-L-seryl-[protein] + ADP + H(+). It carries out the reaction L-threonyl-[protein] + ATP = O-phospho-L-threonyl-[protein] + ADP + H(+). It catalyses the reaction [DNA-directed RNA polymerase] + ATP = phospho-[DNA-directed RNA polymerase] + ADP + H(+). In terms of biological role, component of the srb8-11 complex. The srb8-11 complex is a regulatory module of the Mediator complex which is itself dependent transcription. The srb8-11 complex may be involved in the transcriptional repression of a subset of genes regulated by Mediator. It may inhibit the association of the Mediator complex with RNA polymerase II to form the holoenzyme complex. The srb8-11 complex phosphorylates the C-terminal domain (CTD) of the largest subunit of RNA polymerase II. This is Serine/threonine-protein kinase ssn3 (ssn3) from Neosartorya fischeri (strain ATCC 1020 / DSM 3700 / CBS 544.65 / FGSC A1164 / JCM 1740 / NRRL 181 / WB 181) (Aspergillus fischerianus).